The sequence spans 545 residues: Thermosome subunit alpha (545 aa).

It belongs to the TCP-1 chaperonin family. In terms of assembly, forms a Heterooligomeric complex of two stacked eight-membered rings.

In terms of biological role, molecular chaperone; binds unfolded polypeptides in vitro, and has a weak ATPase activity. The sequence is that of Thermosome subunit alpha (thsA) from Archaeoglobus fulgidus (strain ATCC 49558 / DSM 4304 / JCM 9628 / NBRC 100126 / VC-16).